The sequence spans 281 residues: 2-dehydro-3-deoxyphosphooctonate aldolase (281 aa).

The protein belongs to the KdsA family.

Its subcellular location is the cytoplasm. It catalyses the reaction D-arabinose 5-phosphate + phosphoenolpyruvate + H2O = 3-deoxy-alpha-D-manno-2-octulosonate-8-phosphate + phosphate. Its pathway is carbohydrate biosynthesis; 3-deoxy-D-manno-octulosonate biosynthesis; 3-deoxy-D-manno-octulosonate from D-ribulose 5-phosphate: step 2/3. It participates in bacterial outer membrane biogenesis; lipopolysaccharide biosynthesis. This chain is 2-dehydro-3-deoxyphosphooctonate aldolase, found in Pseudomonas fluorescens (strain Pf0-1).